A 658-amino-acid polypeptide reads, in one-letter code: MSCSVSLSFPDGSKRDYPNEMTGLELAASISKSLAKKAVAYSLNGITRDLSDPLGQSGQIEIITREDPRALELIRHDCAHVLAEAVQELFPETQVTIGPVIENGFYYDFARQQPFTLNDLTIIEKKMHEIIQRNKPFRKEIWSRKKAREIFSEKNELYKVELIDSIPDNQDLKIYYQGDWFDLCRGPHMQSTGQIGNAFKLMKVAGAYWRGDAHNPMLTRIYGTAFANENDLKAYLHMLEEAEKRDHRRLGREMDLFHFQEDGPGMIFWHQKGWKMFQNLISYMRRRLDDHQYSEVNAPQVLDKSLWELSGHWGWYKENMFKAIPAIEDWDDKCIYALKPMNCPGHVQIFKHSLKSYRDLPVRLAEFGVVHRYEPSGALHGLMRVRSFTQDDAHIFCTDEQLADECLNINDLILSTYADFGFKEISLKLSTRPEKRVGSDSLWDHAENIMESVLKTIETKFAGQIKTSILPGEGAFYGPKFEYTLKDAIGREWQCGTTQVDFNLPERFDAFYIDKDSEKRQPVMIHRAIFGSMERFLGILIENFAGHMPLWLAPEQVVVAAITSEANEYAKKITARLKAVGLSAKSDLRNEKINYKIREHSLQKVPVILVCGKREAETNSVSMRRLGSTDQVFLSIEETIEQLKNEAMSPDLRRSING.

One can recognise a TGS domain in the interval 1-64; sequence MSCSVSLSFP…GQSGQIEIIT (64 aa). A catalytic region spans residues 246–549; it reads DHRRLGREMD…LIENFAGHMP (304 aa). Residues C343, H394, and H526 each coordinate Zn(2+).

It belongs to the class-II aminoacyl-tRNA synthetase family. As to quaternary structure, homodimer. Zn(2+) is required as a cofactor.

It localises to the cytoplasm. The catalysed reaction is tRNA(Thr) + L-threonine + ATP = L-threonyl-tRNA(Thr) + AMP + diphosphate + H(+). Functionally, catalyzes the attachment of threonine to tRNA(Thr) in a two-step reaction: L-threonine is first activated by ATP to form Thr-AMP and then transferred to the acceptor end of tRNA(Thr). Also edits incorrectly charged L-seryl-tRNA(Thr). In Bartonella quintana (strain Toulouse) (Rochalimaea quintana), this protein is Threonine--tRNA ligase.